The sequence spans 219 residues: Phosphatidylinositol phosphate synthase (219 aa).

Position 29 to 32 (29 to 32 (NQLT)) interacts with a CDP-1,2-diacyl-sn-glycerol. The next 2 membrane-spanning stretches (helical) occupy residues 31 to 47 (LTLV…LLLI) and 53 to 72 (IWAA…DGTV). Positions 66 and 69 each coordinate Mg(2+). Residues Gly70, Arg74, and Thr80 each contribute to the a CDP-1,2-diacyl-sn-glycerol site. The Mg(2+) site is built by Asp87 and Asp91. Asp91 functions as the Proton acceptor in the catalytic mechanism. The next 4 membrane-spanning stretches (helical) occupy residues 93 to 110 (ITDG…VYSY), 116 to 133 (LVAA…ISYV), 154 to 171 (RLIV…GVPY), and 177 to 194 (LWAL…RLVM).

It belongs to the CDP-alcohol phosphatidyltransferase class-I family. In terms of assembly, homodimer. Mg(2+) is required as a cofactor.

It is found in the cell membrane. It catalyses the reaction a CDP-1,2-diacyl-sn-glycerol + 1D-myo-inositol 3-phosphate = a 1,2-diacyl-sn-glycero-3-phospho-(1D-myo-inositol-3-phosphate) + CMP + H(+). It carries out the reaction 1,2-di-(9Z-octadecenoyl)-sn-glycero-3-cytidine-5'-diphosphate + 1D-myo-inositol 3-phosphate = 1,2-di-(9Z-octadecenoyl)-sn-glycero-3-phospho-(1D-myo-inositol-3-phosphate) + CMP + H(+). It participates in phospholipid metabolism; phosphatidylinositol phosphate biosynthesis. In terms of biological role, catalyzes the conjugation of the 1'-hydroxyl group of D-myo-inositol-3-phosphate (also named L-myo-inositol-1-phosphate) with a lipid tail of cytidine diphosphate diacylglycerol (CDP-DAG), forming phosphatidylinositol phosphate (PIP) and CMP. PIP is a precursor of phosphatidylinositol (PI) which is an essential lipid required for cell wall formation. This chain is Phosphatidylinositol phosphate synthase, found in Corynebacterium glutamicum (strain ATCC 13032 / DSM 20300 / JCM 1318 / BCRC 11384 / CCUG 27702 / LMG 3730 / NBRC 12168 / NCIMB 10025 / NRRL B-2784 / 534).